Consider the following 594-residue polypeptide: ATP-dependent zinc metalloprotease FtsH 1 (594 aa).

The Cytoplasmic segment spans residues 1 to 2 (MR). Residues 3–23 (WWAGAALLLAALLFGRPAAAM) form a helical membrane-spanning segment. The Extracellular segment spans residues 24–92 (EAQPVAYSEF…RVEFVRPADP (69 aa)). A helical membrane pass occupies residues 93 to 113 (IAFRTLLRFIPPLLILGAILW). Residues 114–594 (FTRRTAGGSG…ANSRGDEGNQ (481 aa)) are Cytoplasmic-facing. Residue 186-193 (GPPGTGKT) coordinates ATP. His-408 is a binding site for Zn(2+). Glu-409 is an active-site residue. Zn(2+) is bound by residues His-412 and Asp-485.

This sequence in the central section; belongs to the AAA ATPase family. In the C-terminal section; belongs to the peptidase M41 family. In terms of assembly, homohexamer. It depends on Zn(2+) as a cofactor.

Its subcellular location is the cell membrane. Acts as a processive, ATP-dependent zinc metallopeptidase for both cytoplasmic and membrane proteins. Plays a role in the quality control of integral membrane proteins. In Symbiobacterium thermophilum (strain DSM 24528 / JCM 14929 / IAM 14863 / T), this protein is ATP-dependent zinc metalloprotease FtsH 1.